Consider the following 126-residue polypeptide: Aspartate 1-decarboxylase (126 aa).

The Schiff-base intermediate with substrate; via pyruvic acid role is filled by S25. A Pyruvic acid (Ser) modification is found at S25. T57 is a substrate binding site. Y58 functions as the Proton donor in the catalytic mechanism. 73–75 (GAA) contacts substrate.

This sequence belongs to the PanD family. Heterooctamer of four alpha and four beta subunits. It depends on pyruvate as a cofactor. Is synthesized initially as an inactive proenzyme, which is activated by self-cleavage at a specific serine bond to produce a beta-subunit with a hydroxyl group at its C-terminus and an alpha-subunit with a pyruvoyl group at its N-terminus.

Its subcellular location is the cytoplasm. It catalyses the reaction L-aspartate + H(+) = beta-alanine + CO2. It participates in cofactor biosynthesis; (R)-pantothenate biosynthesis; beta-alanine from L-aspartate: step 1/1. Catalyzes the pyruvoyl-dependent decarboxylation of aspartate to produce beta-alanine. The sequence is that of Aspartate 1-decarboxylase from Methylococcus capsulatus (strain ATCC 33009 / NCIMB 11132 / Bath).